The following is a 758-amino-acid chain: Calpain (758 aa).

The Calpain catalytic domain occupies 99 to 397 (LWEDPDFPAN…FSRVEVCHLG (299 aa)). Residues cysteine 154, histidine 313, and asparagine 337 contribute to the active site. A domain III region spans residues 398-562 (LESLEYNQNF…TSITEQELDE (165 aa)). Residues 563 to 582 (DNTNQGLPDDVIEALKLEDT) are linker. The segment at 583–757 (LLDEDQEIEQ…AEDYLRFSVY (175 aa)) is domain IV. Ca(2+) is bound by residues aspartate 641, asparagine 643, threonine 645, histidine 647, glutamate 652, aspartate 671, aspartate 673, serine 675, tyrosine 677, and glutamate 682. EF-hand domains lie at 658-693 (IQAK…AGYH) and 694-729 (VSNR…LKTA).

Belongs to the peptidase C2 family.

With respect to regulation, activated by free cytoplasmic calcium. In terms of biological role, calpains are calcium-activated non-lysosomal thiol-proteases. This Schistosoma mansoni (Blood fluke) protein is Calpain.